The chain runs to 248 residues: UDP-2,3-diacylglucosamine hydrolase (248 aa).

Mn(2+) contacts are provided by D7, H9, D40, N78, and H113. Substrate is bound at residue 78 to 79; the sequence is NR. Residues D121, S159, T163, K166, and H194 each coordinate substrate. H194 and H196 together coordinate Mn(2+).

The protein belongs to the LpxH family. Requires Mn(2+) as cofactor.

The protein localises to the cell inner membrane. It catalyses the reaction UDP-2-N,3-O-bis[(3R)-3-hydroxytetradecanoyl]-alpha-D-glucosamine + H2O = 2-N,3-O-bis[(3R)-3-hydroxytetradecanoyl]-alpha-D-glucosaminyl 1-phosphate + UMP + 2 H(+). It participates in glycolipid biosynthesis; lipid IV(A) biosynthesis; lipid IV(A) from (3R)-3-hydroxytetradecanoyl-[acyl-carrier-protein] and UDP-N-acetyl-alpha-D-glucosamine: step 4/6. In terms of biological role, hydrolyzes the pyrophosphate bond of UDP-2,3-diacylglucosamine to yield 2,3-diacylglucosamine 1-phosphate (lipid X) and UMP by catalyzing the attack of water at the alpha-P atom. Involved in the biosynthesis of lipid A, a phosphorylated glycolipid that anchors the lipopolysaccharide to the outer membrane of the cell. This Pseudomonas syringae pv. tomato (strain ATCC BAA-871 / DC3000) protein is UDP-2,3-diacylglucosamine hydrolase.